A 246-amino-acid chain; its full sequence is tRNA pseudouridine synthase A (246 aa).

The active-site Nucleophile is aspartate 53. A substrate-binding site is contributed by tyrosine 112.

This sequence belongs to the tRNA pseudouridine synthase TruA family. In terms of assembly, homodimer.

It catalyses the reaction uridine(38/39/40) in tRNA = pseudouridine(38/39/40) in tRNA. Functionally, formation of pseudouridine at positions 38, 39 and 40 in the anticodon stem and loop of transfer RNAs. This chain is tRNA pseudouridine synthase A, found in Anaplasma phagocytophilum (strain HZ).